Reading from the N-terminus, the 413-residue chain is MQAEIIAVGTEILMGQITNTNGAYMAKQLTALGIDSYHQQVVGDNGPRLEEAIKLAESRSNLVILIGGLGPTPDDLTKQTLAAHLNRKLVEDPDAMAKLQARVKQQQRPMTPNNQLQAMYPEGADILVNRVGLAVGAWIVNGQHTYVLLPGPPKEFVPMVDHELLPRLAKWSGHAEVMVSRVLRFFGIGESQLVTDLDDLIANQTDPTIATYIKDHEVTVRVTASGATEKDADAKLEPMVGAIMDRDGQYFYGYGDDNSLAKELVKTLAANDMQITAAESLTAGAFQAALGDVPGVSTYFKGGFVTYSLATKAAFLAIDARELAAHGVVSAFTAKAMAEHARRKAAADISVSFTGVAGPDTLEGQPAGTVWIGLARRGQLPEAHVYHFPGGRNDVRQRAVMTGMMLALRALQA.

The protein belongs to the CinA family.

This is Putative competence-damage inducible protein from Lacticaseibacillus paracasei (strain ATCC 334 / BCRC 17002 / CCUG 31169 / CIP 107868 / KCTC 3260 / NRRL B-441) (Lactobacillus paracasei).